A 133-amino-acid polypeptide reads, in one-letter code: Brain natriuretic peptide (133 aa).

The signal sequence occupies residues 1–22; sequence MVVSFVSICGLLLIFNLPLSTS. A compositionally biased stretch (acidic residues) spans 44 to 53; the sequence is SMSEETEEDQ. 2 disordered regions span residues 44-76 and 93-112; these read SMSE…NRDQ and TRKN…FGRR. Cysteines 108 and 124 form a disulfide.

Belongs to the natriuretic peptide family.

It localises to the secreted. In terms of biological role, cardiac hormone which may function as a paracrine antifibrotic factor in the heart. Also plays a key role in cardiovascular homeostasis through natriuresis, diuresis, vasorelaxation, and inhibition of renin and aldosterone secretion. Has a cGMP-stimulating activity. The chain is Brain natriuretic peptide (nppb) from Takifugu rubripes (Japanese pufferfish).